We begin with the raw amino-acid sequence, 286 residues long: Pyridoxal kinase PdxY (286 aa).

Residues serine 9 and 44 to 45 (TQ) each bind substrate. 3 residues coordinate ATP: aspartate 111, glutamate 148, and lysine 181. Residue aspartate 222 coordinates substrate.

The protein belongs to the pyridoxine kinase family. PdxY subfamily. As to quaternary structure, homodimer. The cofactor is Mg(2+).

The catalysed reaction is pyridoxal + ATP = pyridoxal 5'-phosphate + ADP + H(+). It participates in cofactor metabolism; pyridoxal 5'-phosphate salvage; pyridoxal 5'-phosphate from pyridoxal: step 1/1. Functionally, pyridoxal kinase involved in the salvage pathway of pyridoxal 5'-phosphate (PLP). Catalyzes the phosphorylation of pyridoxal to PLP. The sequence is that of Pyridoxal kinase PdxY from Histophilus somni (strain 129Pt) (Haemophilus somnus).